We begin with the raw amino-acid sequence, 328 residues long: Serine protease 48 (328 aa).

The first 20 residues, 1 to 20 (MGPAGCAFTLLLLLGISVCG), serve as a signal peptide directing secretion. The region spanning 28–267 (VVGGQDAAAG…YQKWINATIS (240 aa)) is the Peptidase S1 domain. Residues Cys53 and Cys69 are joined by a disulfide bond. Catalysis depends on charge relay system residues His68 and Asp114. Disulfide bonds link Cys148–Cys226, Cys181–Cys205, and Cys216–Cys244. Ser220 (charge relay system) is an active-site residue. N-linked (GlcNAc...) asparagine glycosylation is present at Asn263.

Belongs to the peptidase S1 family.

The protein resides in the secreted. In Homo sapiens (Human), this protein is Serine protease 48 (PRSS48).